A 257-amino-acid chain; its full sequence is MIGRERMTVASQRLIAERTYELTLSGRLVQEMRQPGQFVHVKVAASADPLLRRPLSLCHIDHKQGQCTIIYRQEGKGTALLAQKQPGDTVDVLGPLGNGFPLEAAPAGSRALLVGGGIGVPPLYELAKQLTKRGVKVVSVLGFQTKAAVFYEEEFAAFGETHVATDDGSHGTAGRVTDVIEARSLEFDVLYACGPKPMLRALAERFPNRPVYLSLEERMGCGVGACFACVCHVPGSETAYKKVCSDGPVFRAGEVVL.

In terms of domain architecture, FAD-binding FR-type spans 2–102 (IGRERMTVAS…LGPLGNGFPL (101 aa)). FAD-binding positions include 53-56 (RPLS), 70-72 (IYR), and 77-78 (GT). [2Fe-2S] cluster is bound by residues cysteine 221, cysteine 226, cysteine 229, and cysteine 244.

It belongs to the PyrK family. Heterotetramer of 2 PyrK and 2 PyrD type B subunits. The cofactor is [2Fe-2S] cluster. FAD serves as cofactor.

It functions in the pathway pyrimidine metabolism; UMP biosynthesis via de novo pathway; orotate from (S)-dihydroorotate (NAD(+) route): step 1/1. In terms of biological role, responsible for channeling the electrons from the oxidation of dihydroorotate from the FMN redox center in the PyrD type B subunit to the ultimate electron acceptor NAD(+). In Bacillus caldolyticus, this protein is Dihydroorotate dehydrogenase B (NAD(+)), electron transfer subunit.